A 295-amino-acid polypeptide reads, in one-letter code: Acetylglutamate kinase (295 aa).

Substrate is bound by residues 66–67, Arg88, and Asn193; that span reads GG.

The protein belongs to the acetylglutamate kinase family. ArgB subfamily.

It is found in the cytoplasm. It catalyses the reaction N-acetyl-L-glutamate + ATP = N-acetyl-L-glutamyl 5-phosphate + ADP. It participates in amino-acid biosynthesis; L-arginine biosynthesis; N(2)-acetyl-L-ornithine from L-glutamate: step 2/4. Catalyzes the ATP-dependent phosphorylation of N-acetyl-L-glutamate. In Rhizobium etli (strain ATCC 51251 / DSM 11541 / JCM 21823 / NBRC 15573 / CFN 42), this protein is Acetylglutamate kinase.